A 157-amino-acid polypeptide reads, in one-letter code: Transcriptional repressor NrdR (157 aa).

A zinc finger lies at 3 to 34 (CPFCRHPDSRVVDSRTSDDGLSIRRRRQCPEC). The region spanning 46–136 (LSVIKRNGVV…VYQGFDSLDD (91 aa)) is the ATP-cone domain.

The protein belongs to the NrdR family. It depends on Zn(2+) as a cofactor.

Its function is as follows. Negatively regulates transcription of bacterial ribonucleotide reductase nrd genes and operons by binding to NrdR-boxes. The polypeptide is Transcriptional repressor NrdR (Clavibacter sepedonicus (Clavibacter michiganensis subsp. sepedonicus)).